We begin with the raw amino-acid sequence, 299 residues long: Oxygen-dependent coproporphyrinogen-III oxidase (299 aa).

Position 92 (serine 92) interacts with substrate. Positions 96 and 106 each coordinate Mn(2+). Histidine 106 acts as the Proton donor in catalysis. Residue 108–110 coordinates substrate; it reads NVR. Mn(2+)-binding residues include histidine 145 and histidine 175. The important for dimerization stretch occupies residues 240–275; the sequence is YVEFNLVWDRGTLFGLQTGGRTESILMSMPPLVRWE. Residue 258–260 coordinates substrate; sequence GGR.

This sequence belongs to the aerobic coproporphyrinogen-III oxidase family. As to quaternary structure, homodimer. The cofactor is Mn(2+).

It is found in the cytoplasm. It catalyses the reaction coproporphyrinogen III + O2 + 2 H(+) = protoporphyrinogen IX + 2 CO2 + 2 H2O. It functions in the pathway porphyrin-containing compound metabolism; protoporphyrin-IX biosynthesis; protoporphyrinogen-IX from coproporphyrinogen-III (O2 route): step 1/1. Involved in the heme biosynthesis. Catalyzes the aerobic oxidative decarboxylation of propionate groups of rings A and B of coproporphyrinogen-III to yield the vinyl groups in protoporphyrinogen-IX. The sequence is that of Oxygen-dependent coproporphyrinogen-III oxidase from Escherichia coli (strain SMS-3-5 / SECEC).